Here is a 176-residue protein sequence, read N- to C-terminus: ATP-dependent protease subunit HslV (176 aa).

Thr-2 is an active-site residue. Na(+)-binding residues include Gly-157, Cys-160, and Thr-163.

The protein belongs to the peptidase T1B family. HslV subfamily. As to quaternary structure, a double ring-shaped homohexamer of HslV is capped on each side by a ring-shaped HslU homohexamer. The assembly of the HslU/HslV complex is dependent on binding of ATP.

Its subcellular location is the cytoplasm. It carries out the reaction ATP-dependent cleavage of peptide bonds with broad specificity.. With respect to regulation, allosterically activated by HslU binding. Protease subunit of a proteasome-like degradation complex believed to be a general protein degrading machinery. The chain is ATP-dependent protease subunit HslV from Enterobacter sp. (strain 638).